Consider the following 148-residue polypeptide: MPTHVSKTRKLRGHVSAGHGRIGKHRKHPGGRGKAGGLQHLRSHFDKYHPGYFGKVGMRRFHLMKNPLWRPTVNLDRLWTLLPNEARDKYLGKNTEVAPVINVLQSGYGKVLGKGRLPETPVIVQTRYVSRRAEEKIKQAGGVVELIA.

Composition is skewed to basic residues over residues 1–13 and 21–31; these read MPTH…KLRG and RIGKHRKHPGG. The disordered stretch occupies residues 1–36; that stretch reads MPTHVSKTRKLRGHVSAGHGRIGKHRKHPGGRGKAG.

The protein belongs to the universal ribosomal protein uL15 family. In terms of assembly, component of the large ribosomal subunit (LSU). Mature yeast ribosomes consist of a small (40S) and a large (60S) subunit. The 40S small subunit contains 1 molecule of ribosomal RNA (18S rRNA) and at least 33 different proteins. The large 60S subunit contains 3 rRNA molecules (25S, 5.8S and 5S rRNA) and at least 46 different proteins.

Its subcellular location is the cytoplasm. Component of the ribosome, a large ribonucleoprotein complex responsible for the synthesis of proteins in the cell. The small ribosomal subunit (SSU) binds messenger RNAs (mRNAs) and translates the encoded message by selecting cognate aminoacyl-transfer RNA (tRNA) molecules. The large subunit (LSU) contains the ribosomal catalytic site termed the peptidyl transferase center (PTC), which catalyzes the formation of peptide bonds, thereby polymerizing the amino acids delivered by tRNAs into a polypeptide chain. The nascent polypeptides leave the ribosome through a tunnel in the LSU and interact with protein factors that function in enzymatic processing, targeting, and the membrane insertion of nascent chains at the exit of the ribosomal tunnel. This is Large ribosomal subunit protein uL15A (rpl2802) from Schizosaccharomyces pombe (strain 972 / ATCC 24843) (Fission yeast).